We begin with the raw amino-acid sequence, 338 residues long: Flap endonuclease 1 (338 aa).

Residues 1-98 are N-domain; that stretch reads MGTDIGDLLL…DTLAKRHEVR (98 aa). Mg(2+) is bound by residues D27, D80, E152, E154, D173, D175, and D236. Residues 116 to 257 form an I-domain region; sequence EAYKYAQASS…RALKLVKEHG (142 aa). The tract at residues 330 to 338 is interaction with PCNA; that stretch reads SQSTLDQWF.

Belongs to the XPG/RAD2 endonuclease family. FEN1 subfamily. As to quaternary structure, interacts with PCNA. PCNA stimulates the nuclease activity without altering cleavage specificity. Mg(2+) serves as cofactor.

Structure-specific nuclease with 5'-flap endonuclease and 5'-3' exonuclease activities involved in DNA replication and repair. During DNA replication, cleaves the 5'-overhanging flap structure that is generated by displacement synthesis when DNA polymerase encounters the 5'-end of a downstream Okazaki fragment. Binds the unpaired 3'-DNA end and kinks the DNA to facilitate 5' cleavage specificity. Cleaves one nucleotide into the double-stranded DNA from the junction in flap DNA, leaving a nick for ligation. Also involved in the base excision repair (BER) pathway. Acts as a genome stabilization factor that prevents flaps from equilibrating into structures that lead to duplications and deletions. Also possesses 5'-3' exonuclease activity on nicked or gapped double-stranded DNA. In Methanococcoides burtonii (strain DSM 6242 / NBRC 107633 / OCM 468 / ACE-M), this protein is Flap endonuclease 1.